Reading from the N-terminus, the 440-residue chain is Chromosome partition protein MukF (440 aa).

The leucine-zipper stretch occupies residues 208–236 (LSETSGTLRELQDTLEAAGDKLQANLLRI).

It belongs to the MukF family. As to quaternary structure, interacts, and probably forms a ternary complex, with MukE and MukB via its C-terminal region. The complex formation is stimulated by calcium or magnesium. It is required for an interaction between MukE and MukB.

Its subcellular location is the cytoplasm. The protein resides in the nucleoid. Involved in chromosome condensation, segregation and cell cycle progression. May participate in facilitating chromosome segregation by condensation DNA from both sides of a centrally located replisome during cell division. Not required for mini-F plasmid partitioning. Probably acts via its interaction with MukB and MukE. Overexpression results in anucleate cells. It has a calcium binding activity. The chain is Chromosome partition protein MukF from Citrobacter koseri (strain ATCC BAA-895 / CDC 4225-83 / SGSC4696).